The primary structure comprises 271 residues: Catechol O-methyltransferase (271 aa).

Topologically, residues 1–6 (MPEAPP) are cytoplasmic. The chain crosses the membrane as a helical; Signal-anchor for type II membrane protein span at residues 7 to 26 (LLLAAVLLGLVLLVVLLLLL). The Extracellular portion of the chain corresponds to 27–271 (RHWGWGLCLI…YKGPGSEAGP (245 aa)). S-adenosyl-L-methionine is bound by residues V92, E114, S122, E140, I141, 167 to 170 (GASQ), S169, and D191. Position 191 (D191) interacts with Mg(2+). Position 194 (K194) interacts with substrate. Residues D219 and N220 each coordinate Mg(2+). Substrate contacts are provided by N220 and E249. S267 is subject to Phosphoserine.

This sequence belongs to the class I-like SAM-binding methyltransferase superfamily. Cation-dependent O-methyltransferase family. Requires Mg(2+) as cofactor. In terms of processing, the N-terminus is blocked. Brain, liver, placenta, lymphocytes and erythrocytes.

Its subcellular location is the cytoplasm. It localises to the cell membrane. The enzyme catalyses a catechol + S-adenosyl-L-methionine = a guaiacol + S-adenosyl-L-homocysteine + H(+). It carries out the reaction 2-hydroxyestrone + S-adenosyl-L-methionine = 2-hydroxy-3-methoxy-estrone + S-adenosyl-L-homocysteine + H(+). It catalyses the reaction 4-hydroxyestrone + S-adenosyl-L-methionine = 4-methoxyestrone + S-adenosyl-L-homocysteine + H(+). The catalysed reaction is 2-hydroxyestrone + S-adenosyl-L-methionine = 2-methoxyestrone + S-adenosyl-L-homocysteine + H(+). The enzyme catalyses 4-hydroxy-17beta-estradiol + S-adenosyl-L-methionine = 4-methoxy-17beta-estradiol + S-adenosyl-L-homocysteine + H(+). It carries out the reaction 2-hydroxy-17beta-estradiol + S-adenosyl-L-methionine = 2-hydroxy-3-methoxy-17beta-estradiol + S-adenosyl-L-homocysteine + H(+). It catalyses the reaction 2-hydroxy-17beta-estradiol + S-adenosyl-L-methionine = 2-methoxy-17beta-estradiol + S-adenosyl-L-homocysteine + H(+). In terms of biological role, catalyzes the O-methylation, and thereby the inactivation, of catecholamine neurotransmitters and catechol hormones. Also shortens the biological half-lives of certain neuroactive drugs, like L-DOPA, alpha-methyl DOPA and isoproterenol. This Homo sapiens (Human) protein is Catechol O-methyltransferase.